The sequence spans 411 residues: Corticotropin-releasing factor receptor 2 (411 aa).

The not cleaved signal peptide spans 1–19; the sequence is MDAALLLSLLEANCSLALA. The Extracellular segment spans residues 1-108; it reads MDAALLLSLL…EPILDDKQRK (108 aa). Asn-13, Asn-41, Asn-74, Asn-86, and Asn-94 each carry an N-linked (GlcNAc...) asparagine glycan. 3 cysteine pairs are disulfide-bonded: Cys-14-Cys-50, Cys-40-Cys-83, and Cys-64-Cys-98. The chain crosses the membrane as a helical span at residues 109 to 139; it reads YDLHYRIALIVNYLGHCVSVVALVAAFLLFL. The Cytoplasmic segment spans residues 140 to 146; the sequence is VLRSIRC. The helical transmembrane segment at 147–171 threads the bilayer; it reads LRNVIHWNLITTFILRNIAWFLLQL. The Extracellular portion of the chain corresponds to 172 to 185; that stretch reads IDHEVHEGNEVWCR. Cys-184 and Cys-254 are joined by a disulfide. The helical transmembrane segment at 186–214 threads the bilayer; it reads CITTIFNYFVVTNFFWMFVEGCYLHTAIV. At 215–221 the chain is on the cytoplasmic side; that stretch reads MTYSTEH. The chain crosses the membrane as a helical span at residues 222–249; it reads LRKWLFLFIGWCIPCPIIIAWAVGKLYY. Topologically, residues 250–265 are extracellular; sequence ENEQCWFGKEAGDLVD. The chain crosses the membrane as a helical span at residues 266-291; sequence YIYQGPVMLVLLINFVFLFNIVRILM. At 292–302 the chain is on the cytoplasmic side; the sequence is TKLRASTTSET. Residues 303-327 form a helical membrane-spanning segment; sequence IQYRKAVKATLVLLPLLGITYMLFF. At 328–334 the chain is on the extracellular side; it reads VNPGEDD. The helical transmembrane segment at 335–364 threads the bilayer; sequence LSQIVFIYFNSFLQSFQGFFVSVFYCFFNG. Topologically, residues 365–411 are cytoplasmic; the sequence is EVRAALRKRWHRWQDHHALRVPVARAMSIPTSPTRISFHSIKQTAAV.

It belongs to the G-protein coupled receptor 2 family. Monomer. Interacts with CRF, UCN, UCN2 and UCN3. An N-glycosylation site within the signal peptide impedes its proper cleavage and function. Highly expressed in the heart. Also expressed in lungs, skeletal muscle, gastrointestinal tract, epididymis, and brain.

The protein localises to the cell membrane. In terms of biological role, G-protein coupled receptor for CRH (corticotropin-releasing factor), UCN (urocortin), UCN2 and UCN3. Has high affinity for UCN. Ligand binding causes a conformation change that triggers signaling via guanine nucleotide-binding proteins (G proteins) and down-stream effectors, such as adenylate cyclase. Promotes the activation of adenylate cyclase, leading to increased intracellular cAMP levels. This Mus musculus (Mouse) protein is Corticotropin-releasing factor receptor 2 (Crhr2).